Here is a 308-residue protein sequence, read N- to C-terminus: Glutamyl-Q tRNA(Asp) synthetase (308 aa).

L-glutamate is bound by residues 19-23 and E55; that span reads RFAPS. Positions 22–32 match the 'HIGH' region motif; the sequence is PSPSGELHFGS. Residues C111, C113, Y125, and C129 each coordinate Zn(2+). L-glutamate is bound by residues Y182 and R200. The short motif at 238-242 is the 'KMSKS' region element; it reads KLSKQ. Position 241 (K241) interacts with ATP.

This sequence belongs to the class-I aminoacyl-tRNA synthetase family. GluQ subfamily. It depends on Zn(2+) as a cofactor.

Catalyzes the tRNA-independent activation of glutamate in presence of ATP and the subsequent transfer of glutamate onto a tRNA(Asp). Glutamate is transferred on the 2-amino-5-(4,5-dihydroxy-2-cyclopenten-1-yl) moiety of the queuosine in the wobble position of the QUC anticodon. This is Glutamyl-Q tRNA(Asp) synthetase from Shigella flexneri.